A 78-amino-acid chain; its full sequence is RNA-binding protein KhpA (78 aa).

The 50-residue stretch at 29-78 folds into the KH domain; that stretch reads TIIYELTVAKGDIGKIIGKEGRTIKAIRTLLVSVASRDNVKVSLEIMEER.

It belongs to the KhpA RNA-binding protein family.

The protein resides in the cytoplasm. A probable RNA-binding protein. This is RNA-binding protein KhpA from Chlamydia trachomatis serovar D (strain ATCC VR-885 / DSM 19411 / UW-3/Cx).